We begin with the raw amino-acid sequence, 622 residues long: Elongation factor 4 (622 aa).

The region spanning 17-198 (ELLRNFCIIA…QIVRQIPAPV (182 aa)) is the tr-type G domain. GTP-binding positions include 29–34 (DHGKST) and 145–148 (NKID).

It belongs to the TRAFAC class translation factor GTPase superfamily. Classic translation factor GTPase family. LepA subfamily.

The protein localises to the cell membrane. It carries out the reaction GTP + H2O = GDP + phosphate + H(+). Functionally, required for accurate and efficient protein synthesis under certain stress conditions. May act as a fidelity factor of the translation reaction, by catalyzing a one-codon backward translocation of tRNAs on improperly translocated ribosomes. Back-translocation proceeds from a post-translocation (POST) complex to a pre-translocation (PRE) complex, thus giving elongation factor G a second chance to translocate the tRNAs correctly. Binds to ribosomes in a GTP-dependent manner. The sequence is that of Elongation factor 4 from Kineococcus radiotolerans (strain ATCC BAA-149 / DSM 14245 / SRS30216).